The sequence spans 622 residues: Low affinity potassium transport system protein Kup (622 aa).

Transmembrane regions (helical) follow at residues 9-29 (LPAI…TSPL), 49-69 (VFGF…IKYL), 103-123 (VIMG…TPAI), 137-157 (PQLD…LFMI), 165-185 (VGKL…GLGL), 213-233 (VSFI…ALYA), 247-267 (WFTV…ALLL), 276-296 (PFFL…AALA), 337-357 (IYIP…IVSF), 363-383 (LAAA…ILST), 396-416 (FVAL…TANL), and 419-439 (LLSG…VMTT).

Belongs to the HAK/KUP transporter (TC 2.A.72) family.

It localises to the cell inner membrane. It carries out the reaction K(+)(in) + H(+)(in) = K(+)(out) + H(+)(out). Responsible for the low-affinity transport of potassium into the cell. Likely operates as a K(+):H(+) symporter. The polypeptide is Low affinity potassium transport system protein Kup (Escherichia fergusonii (strain ATCC 35469 / DSM 13698 / CCUG 18766 / IAM 14443 / JCM 21226 / LMG 7866 / NBRC 102419 / NCTC 12128 / CDC 0568-73)).